The primary structure comprises 336 residues: Dihydroorotate dehydrogenase (quinone) (336 aa).

FMN contacts are provided by residues 62–66 (AGLDK) and threonine 86. Lysine 66 is a substrate binding site. A substrate-binding site is contributed by 111–115 (NRMGF). 2 residues coordinate FMN: asparagine 139 and asparagine 172. Asparagine 172 is a substrate binding site. Serine 175 serves as the catalytic Nucleophile. Position 177 (asparagine 177) interacts with substrate. Residues lysine 217 and threonine 245 each coordinate FMN. 246–247 (NT) contributes to the substrate binding site. FMN is bound by residues glycine 268, glycine 297, and 318–319 (YS).

The protein belongs to the dihydroorotate dehydrogenase family. Type 2 subfamily. In terms of assembly, monomer. Requires FMN as cofactor.

The protein resides in the cell membrane. It catalyses the reaction (S)-dihydroorotate + a quinone = orotate + a quinol. Its pathway is pyrimidine metabolism; UMP biosynthesis via de novo pathway; orotate from (S)-dihydroorotate (quinone route): step 1/1. In terms of biological role, catalyzes the conversion of dihydroorotate to orotate with quinone as electron acceptor. The sequence is that of Dihydroorotate dehydrogenase (quinone) from Vibrio atlanticus (strain LGP32) (Vibrio splendidus (strain Mel32)).